The following is a 156-amino-acid chain: RING finger protein 224 (156 aa).

The RING-type zinc finger occupies 24 to 71 (CIICCSAYDLSGHLPRRLYCGHTFCQACVRRLDTPAPEQRWIPCPQCR).

The sequence is that of RING finger protein 224 (RNF224) from Homo sapiens (Human).